Here is a 462-residue protein sequence, read N- to C-terminus: tRNA(Ile)-lysidine synthase (462 aa).

31–36 (SGGRDS) is an ATP binding site.

Belongs to the tRNA(Ile)-lysidine synthase family.

It localises to the cytoplasm. The enzyme catalyses cytidine(34) in tRNA(Ile2) + L-lysine + ATP = lysidine(34) in tRNA(Ile2) + AMP + diphosphate + H(+). Functionally, ligates lysine onto the cytidine present at position 34 of the AUA codon-specific tRNA(Ile) that contains the anticodon CAU, in an ATP-dependent manner. Cytidine is converted to lysidine, thus changing the amino acid specificity of the tRNA from methionine to isoleucine. The sequence is that of tRNA(Ile)-lysidine synthase from Ralstonia nicotianae (strain ATCC BAA-1114 / GMI1000) (Ralstonia solanacearum).